The chain runs to 62 residues: Photosystem II reaction center protein Z (62 aa).

The next 2 helical transmembrane spans lie at 8–28 (TLLA…VLLA) and 41–61 (FSGS…NSFV).

The protein belongs to the PsbZ family. PSII is composed of 1 copy each of membrane proteins PsbA, PsbB, PsbC, PsbD, PsbE, PsbF, PsbH, PsbI, PsbJ, PsbK, PsbL, PsbM, PsbT, PsbY, PsbZ, Psb30/Ycf12, at least 3 peripheral proteins of the oxygen-evolving complex and a large number of cofactors. It forms dimeric complexes.

It is found in the plastid. The protein localises to the chloroplast thylakoid membrane. Its function is as follows. May control the interaction of photosystem II (PSII) cores with the light-harvesting antenna, regulates electron flow through the 2 photosystem reaction centers. PSII is a light-driven water plastoquinone oxidoreductase, using light energy to abstract electrons from H(2)O, generating a proton gradient subsequently used for ATP formation. This chain is Photosystem II reaction center protein Z, found in Ostreococcus tauri.